An 83-amino-acid polypeptide reads, in one-letter code: Cytochrome b559 subunit alpha (83 aa).

The chain crosses the membrane as a helical span at residues 21 to 35 (VIHSITIPSLFIAGW). H23 is a heme binding site.

It belongs to the PsbE/PsbF family. In terms of assembly, heterodimer of an alpha subunit and a beta subunit. PSII is composed of 1 copy each of membrane proteins PsbA, PsbB, PsbC, PsbD, PsbE, PsbF, PsbH, PsbI, PsbJ, PsbK, PsbL, PsbM, PsbT, PsbX, PsbY, PsbZ, Psb30/Ycf12, at least 3 peripheral proteins of the oxygen-evolving complex and a large number of cofactors. It forms dimeric complexes. The cofactor is heme b.

It localises to the plastid. Its subcellular location is the chloroplast thylakoid membrane. Functionally, this b-type cytochrome is tightly associated with the reaction center of photosystem II (PSII). PSII is a light-driven water:plastoquinone oxidoreductase that uses light energy to abstract electrons from H(2)O, generating O(2) and a proton gradient subsequently used for ATP formation. It consists of a core antenna complex that captures photons, and an electron transfer chain that converts photonic excitation into a charge separation. In Agrostis stolonifera (Creeping bentgrass), this protein is Cytochrome b559 subunit alpha.